The primary structure comprises 276 residues: Putative translation initiation factor eIF-2B subunit 2-like (276 aa).

The protein belongs to the eIF-2B alpha/beta/delta subunits family. Complex of two different subunits.

Its function is as follows. Catalyzes the exchange of initiation factor 2-bound GDP for GTP. In Pyrococcus horikoshii (strain ATCC 700860 / DSM 12428 / JCM 9974 / NBRC 100139 / OT-3), this protein is Putative translation initiation factor eIF-2B subunit 2-like.